Reading from the N-terminus, the 326-residue chain is Ribose-phosphate pyrophosphokinase (326 aa).

Residues 45-47 (NGE) and 104-105 (RQ) contribute to the ATP site. Mg(2+) contacts are provided by His138 and Asp178. Lys202 is a catalytic residue. D-ribose 5-phosphate is bound by residues Arg204, Asp230, and 234-238 (DTGGT).

This sequence belongs to the ribose-phosphate pyrophosphokinase family. Class I subfamily. Homohexamer. Mg(2+) is required as a cofactor.

It localises to the cytoplasm. The enzyme catalyses D-ribose 5-phosphate + ATP = 5-phospho-alpha-D-ribose 1-diphosphate + AMP + H(+). The protein operates within metabolic intermediate biosynthesis; 5-phospho-alpha-D-ribose 1-diphosphate biosynthesis; 5-phospho-alpha-D-ribose 1-diphosphate from D-ribose 5-phosphate (route I): step 1/1. Involved in the biosynthesis of the central metabolite phospho-alpha-D-ribosyl-1-pyrophosphate (PRPP) via the transfer of pyrophosphoryl group from ATP to 1-hydroxyl of ribose-5-phosphate (Rib-5-P). This Mycobacterium bovis (strain ATCC BAA-935 / AF2122/97) protein is Ribose-phosphate pyrophosphokinase.